The primary structure comprises 341 residues: Phospholipid phosphatase homolog 1.2 homolog (341 aa).

Helical transmembrane passes span 30 to 50 (LFIF…LLGV), 71 to 91 (ITAV…VLFV), and 122 to 142 (LLTY…LNIV). A glycan (N-linked (GlcNAc...) asparagine) is linked at Asn-162. Helical transmembrane passes span 223-243 (RIVV…ISFS) and 257-277 (VGIF…TDLF). 2 disordered regions span residues 284–308 (SETQ…ERHR) and 322–341 (FEAT…PQSA). Residues 299-308 (RNSEDEERHR) show a composition bias toward basic and acidic residues.

This sequence belongs to the PA-phosphatase related phosphoesterase family.

Its subcellular location is the membrane. This is Phospholipid phosphatase homolog 1.2 homolog from Caenorhabditis elegans.